The sequence spans 557 residues: Eukaryotic translation initiation factor 3 subunit D-2 (557 aa).

Positions Gln292–Pro306 are RNA gate. The disordered stretch occupies residues Phe533–Leu557. Basic and acidic residues predominate over residues Asp545–Leu557.

Belongs to the eIF-3 subunit D family. In terms of assembly, component of the eukaryotic translation initiation factor 3 (eIF-3) complex. The eIF-3 complex interacts with pix.

It localises to the cytoplasm. Functionally, mRNA cap-binding component of the eukaryotic translation initiation factor 3 (eIF-3) complex, which is involved in protein synthesis of a specialized repertoire of mRNAs and, together with other initiation factors, stimulates binding of mRNA and methionyl-tRNAi to the 40S ribosome. The eIF-3 complex specifically targets and initiates translation of a subset of mRNAs involved in cell proliferation. In the eIF-3 complex, eif3d specifically recognizes and binds the 7-methylguanosine cap of a subset of mRNAs. The protein is Eukaryotic translation initiation factor 3 subunit D-2 of Drosophila grimshawi (Hawaiian fruit fly).